The primary structure comprises 420 residues: Dihydrolipoyllysine-residue succinyltransferase component of 2-oxoglutarate dehydrogenase complex (420 aa).

In terms of domain architecture, Lipoyl-binding spans 3–78; sequence KINILVPDLP…ISQQTLGEIN (76 aa). Residue lysine 44 is modified to N6-lipoyllysine. Residues histidine 391 and aspartate 395 contribute to the active site.

This sequence belongs to the 2-oxoacid dehydrogenase family. Forms a 24-polypeptide structural core with octahedral symmetry. Part of the 2-oxoglutarate dehydrogenase (OGDH) complex composed of E1 (2-oxoglutarate dehydrogenase), E2 (dihydrolipoamide succinyltransferase) and E3 (dihydrolipoamide dehydrogenase); the complex contains multiple copies of the three enzymatic components (E1, E2 and E3). (R)-lipoate serves as cofactor.

The enzyme catalyses N(6)-[(R)-dihydrolipoyl]-L-lysyl-[protein] + succinyl-CoA = N(6)-[(R)-S(8)-succinyldihydrolipoyl]-L-lysyl-[protein] + CoA. Its pathway is amino-acid degradation; L-lysine degradation via saccharopine pathway; glutaryl-CoA from L-lysine: step 6/6. In terms of biological role, E2 component of the 2-oxoglutarate dehydrogenase (OGDH) complex which catalyzes the second step in the conversion of 2-oxoglutarate to succinyl-CoA and CO(2). The chain is Dihydrolipoyllysine-residue succinyltransferase component of 2-oxoglutarate dehydrogenase complex (sucB) from Buchnera aphidicola subsp. Acyrthosiphon pisum (strain APS) (Acyrthosiphon pisum symbiotic bacterium).